Here is a 341-residue protein sequence, read N- to C-terminus: Ribosomal RNA small subunit methyltransferase H (341 aa).

S-adenosyl-L-methionine-binding positions include 47–49, D64, F91, D109, and Q116; that span reads GGY.

This sequence belongs to the methyltransferase superfamily. RsmH family.

It localises to the cytoplasm. It catalyses the reaction cytidine(1402) in 16S rRNA + S-adenosyl-L-methionine = N(4)-methylcytidine(1402) in 16S rRNA + S-adenosyl-L-homocysteine + H(+). In terms of biological role, specifically methylates the N4 position of cytidine in position 1402 (C1402) of 16S rRNA. The chain is Ribosomal RNA small subunit methyltransferase H from Agrobacterium fabrum (strain C58 / ATCC 33970) (Agrobacterium tumefaciens (strain C58)).